The chain runs to 141 residues: ATP synthase epsilon chain (141 aa).

The protein belongs to the ATPase epsilon chain family. In terms of assembly, F-type ATPases have 2 components, CF(1) - the catalytic core - and CF(0) - the membrane proton channel. CF(1) has five subunits: alpha(3), beta(3), gamma(1), delta(1), epsilon(1). CF(0) has three main subunits: a, b and c.

It is found in the cell inner membrane. In terms of biological role, produces ATP from ADP in the presence of a proton gradient across the membrane. This is ATP synthase epsilon chain from Hahella chejuensis (strain KCTC 2396).